The primary structure comprises 367 residues: Chorismate synthase (367 aa).

Arginine 48 is an NADP(+) binding site. Residues 125–127 (RSS), 243–244 (NA), glycine 283, 298–302 (KPTSS), and arginine 324 contribute to the FMN site.

This sequence belongs to the chorismate synthase family. In terms of assembly, homotetramer. FMNH2 serves as cofactor.

The catalysed reaction is 5-O-(1-carboxyvinyl)-3-phosphoshikimate = chorismate + phosphate. The protein operates within metabolic intermediate biosynthesis; chorismate biosynthesis; chorismate from D-erythrose 4-phosphate and phosphoenolpyruvate: step 7/7. Its function is as follows. Catalyzes the anti-1,4-elimination of the C-3 phosphate and the C-6 proR hydrogen from 5-enolpyruvylshikimate-3-phosphate (EPSP) to yield chorismate, which is the branch point compound that serves as the starting substrate for the three terminal pathways of aromatic amino acid biosynthesis. This reaction introduces a second double bond into the aromatic ring system. The protein is Chorismate synthase of Psychrobacter cryohalolentis (strain ATCC BAA-1226 / DSM 17306 / VKM B-2378 / K5).